A 371-amino-acid polypeptide reads, in one-letter code: uncharacterized protein (371 aa).

The protein belongs to the glycerate kinase type-1 family.

This is an uncharacterized protein from Synechocystis sp. (strain ATCC 27184 / PCC 6803 / Kazusa).